Reading from the N-terminus, the 449-residue chain is MRPKAVWEPEYHRVFVDLCVEQTMLGNKPGTHFSKEGWRNILISFQEQTGAMYDRMQLKNHWDTMSRQWKIWRRLVETSFMNWNPESNRFRATDDDWANYLQENPDAGQYRLSVPHDLKKLEILFAGCNVEVKNDEVSGVRKRRRSCYEEEDEDNQSMCSSSNPQTKGYWSPSTHKLFLDLLVQETLKGNRPDTHFNKEGWKTILGTINENTGLGYTRPQLKNHWDCTRKAWKIWCQLVGASSMKWDPESRSFGATEEEWRIYIRENPRAGQFRHKEVPHADQLAIIFNGVIEPGETYTPPSRSRKKLLHNRSESPQWRDTTPLSKMHVDEAETSRQNGCYAESQEDRIDSENAQPLDDMKLMNDVMLQESPVFVEIESAKPMYSIGECIKSLNAIEEVEQGSELYMFALDLFLKREYREIFLELKKPSLRIAWLQRLQSTSFPIPTTT.

The 64-residue stretch at 162 to 225 folds into the Myb-like domain; it reads SNPQTKGYWS…YTRPQLKNHW (64 aa). Positions 297–324 are disordered; it reads TYTPPSRSRKKLLHNRSESPQWRDTTPL. The span at 314–324 shows a compositional bias: polar residues; sequence ESPQWRDTTPL.

As to quaternary structure, interacts with RPL10A. As to expression, expressed in seedlings, leaves, roots, stems and flowers.

It is found in the nucleus. Its function is as follows. Transcriptional repressor that associates with ribosomal protein promoters. This Arabidopsis thaliana (Mouse-ear cress) protein is L10-interacting MYB domain-containing protein.